The primary structure comprises 179 residues: MEKLIKDGEELNRTLDRMAHEILEKHEIDNTLALVGIRTRGIYIARRLMEKIKKITGKDVLYGELDITLYRDDLSQVAEQPVLKATNIPFDITGKTIILTDDVLYTGRTIRSALAALSDFGRPSRIELAVIVDRGHRELPIKADYVGKNLPTAKTEIVHIKLKEYDGEDSITLLVKNND.

A PRPP-binding motif is present at residues Ile-97–Thr-109.

It belongs to the purine/pyrimidine phosphoribosyltransferase family. PyrR subfamily.

The enzyme catalyses UMP + diphosphate = 5-phospho-alpha-D-ribose 1-diphosphate + uracil. Functionally, regulates the transcription of the pyrimidine nucleotide (pyr) operon in response to exogenous pyrimidines. In terms of biological role, also displays a weak uracil phosphoribosyltransferase activity which is not physiologically significant. This Elusimicrobium minutum (strain Pei191) protein is Bifunctional protein PyrR.